A 474-amino-acid polypeptide reads, in one-letter code: Calcitonin receptor (474 aa).

The first 24 residues, M1–P24, serve as a signal peptide directing secretion. At A25–Y146 the chain is on the extracellular side. N28, N73, N125, and N130 each carry an N-linked (GlcNAc...) asparagine glycan. 3 cysteine pairs are disulfide-bonded: C55-C81, C72-C112, and C95-C134. The chain crosses the membrane as a helical span at residues V147–I169. Over F170–V181 the chain is Cytoplasmic. The chain crosses the membrane as a helical span at residues T182–L202. Residues V203–C219 lie on the Extracellular side of the membrane. Residues C219 and C289 are joined by a disulfide bond. The helical transmembrane segment at K220 to I242 threads the bilayer. Over Y243 to L259 the chain is Cytoplasmic. Residues R260 to T280 form a helical membrane-spanning segment. Residues R281–H296 are Extracellular-facing. The helical transmembrane segment at L297–V320 threads the bilayer. Topologically, residues R321 to K340 are cytoplasmic. The helical transmembrane segment at A341–F359 threads the bilayer. Residues P360–M367 are Extracellular-facing. Residues L368–C394 traverse the membrane as a helical segment. Over N395–A474 the chain is Cytoplasmic.

Belongs to the G-protein coupled receptor 2 family. As to quaternary structure, heterodimer of CALCR and RAMP1, RAMP2 or RAMP3; the receptor complexes function as AMYR1, AMYR2 and AMYR3 receptors, respectively, and respond to amylin/IAPP, calcitonin/CT and CGRP1 ligands. Interacts with GPRASP2.

The protein resides in the cell membrane. Sensitive to cholera toxin. Its function is as follows. G protein-coupled receptor activated by ligand peptides amylin (IAPP), calcitonin (CT/CALCA) and calcitonin gene-related peptide type 1 (CGRP1/CALCA). CALCR interacts with receptor-activity-modifying proteins RAMP1, 2 and 3 to form receptor complexes AMYR1, 2 and 3, respectively. IAPP, CT and CGRP1 activate CALCR and AMYRs with distinct modes of receptor activation resulting in specific phenotypes. Ligand binding causes a conformation change that triggers signaling via guanine nucleotide-binding proteins (G proteins) and modulates the activity of downstream effectors. Activates cAMP-dependent pathway. Non-functional protein. Unable to couple to G proteins and activate adenylyl cyclase. Does not undergo receptor internalization following ligand binding. This Homo sapiens (Human) protein is Calcitonin receptor.